The following is a 330-amino-acid chain: Glycerol-3-phosphate dehydrogenase [NAD(P)+] (330 aa).

NADPH is bound by residues S10, W11, R31, and K105. K105, G135, and S137 together coordinate sn-glycerol 3-phosphate. A139 contributes to the NADPH binding site. Sn-glycerol 3-phosphate is bound by residues K190, D243, S253, R254, and N255. The Proton acceptor role is filled by K190. NADPH is bound at residue R254. Residues V278 and E280 each contribute to the NADPH site.

It belongs to the NAD-dependent glycerol-3-phosphate dehydrogenase family.

Its subcellular location is the cytoplasm. It carries out the reaction sn-glycerol 3-phosphate + NAD(+) = dihydroxyacetone phosphate + NADH + H(+). The catalysed reaction is sn-glycerol 3-phosphate + NADP(+) = dihydroxyacetone phosphate + NADPH + H(+). It functions in the pathway membrane lipid metabolism; glycerophospholipid metabolism. Catalyzes the reduction of the glycolytic intermediate dihydroxyacetone phosphate (DHAP) to sn-glycerol 3-phosphate (G3P), the key precursor for phospholipid synthesis. In Nitratidesulfovibrio vulgaris (strain DP4) (Desulfovibrio vulgaris), this protein is Glycerol-3-phosphate dehydrogenase [NAD(P)+].